The sequence spans 911 residues: Protein transport protein SEC24-1 (911 aa).

The span at 108–123 shows a compositional bias: low complexity; the sequence is QPLPQQQQQQQQQQGP. Positions 108-130 are disordered; the sequence is QPLPQQQQQQQQQQGPAKPPKPM. Cysteine 226, cysteine 229, cysteine 248, and cysteine 251 together coordinate Zn(2+). The tract at residues 226–251 is zinc finger-like; that stretch reads CRRCRSYMNPFVHFNQDGRRWKCNIC.

This sequence belongs to the SEC23/SEC24 family. SEC24 subfamily. In terms of assembly, the COPII coat is composed of at least 5 proteins: the SEC23/24 complex, the SEC13/31 complex, and the protein SAR1. Golgi apparatus membrane; Peripheral membrane protein; Cytoplasmic side.

The protein localises to the cytoplasm. It is found in the cytoplasmic vesicle. It localises to the COPII-coated vesicle membrane. Its subcellular location is the endoplasmic reticulum membrane. The protein resides in the golgi apparatus membrane. In terms of biological role, component of the coat protein complex II (COPII) which promotes the formation of transport vesicles from the endoplasmic reticulum (ER). The coat has two main functions, the physical deformation of the endoplasmic reticulum membrane into vesicles and the selection of cargo molecules. This is Protein transport protein SEC24-1 (SEC241) from Naumovozyma castellii (Yeast).